A 307-amino-acid chain; its full sequence is Oligopeptide transport ATP-binding protein OppF (307 aa).

The ABC transporter domain maps to 6-251 (VEVKDLEISF…PIHPYTQSLL (246 aa)). 42 to 49 (GESGSGKT) contacts ATP.

This sequence belongs to the ABC transporter superfamily. The complex is composed of two ATP-binding proteins (OppD and OppF), two transmembrane proteins (OppB and OppC) and a solute-binding protein (OppA).

It is found in the cell membrane. The catalysed reaction is a [peptide](out) + ATP + H2O = a [peptide](in) + ADP + phosphate + H(+). Its function is as follows. Part of the ABC transporter complex OppABCDF involved in the uptake of oligopeptides. Probably responsible for energy coupling to the transport system. This chain is Oligopeptide transport ATP-binding protein OppF (oppF), found in Streptococcus pyogenes serotype M1.